The chain runs to 631 residues: MSKIIGIDLGTTNSCVAVMEGASPKVIENAEGARTTPSIVAFTEDGERLVGQPAKRQGVTNPERTFFAVKRLIGRRYDDPTVEKDKKLVPYKVVRADNGDAWVESDGKKYSPSQISAFILQKMKETAESFLGEKVEKAVITVPAYFNDAQRQATKDAGRIAGLEVLRIINEPTAAALAYGLDKKNSGTIAVYDLGGGTFDVSVLEIGDGVFEVKSTNGDTFLGGEDFDMRLVNYLADEFKKEQGIDLRNDKLALQRLKEAAEKAKIELSSATQTEINLPFITADASGPKHLTMKLTRAKFEALVEDLIQRTMEPCRLALKDAGLSAGQIDEVVLVGGMTRMPKVQEMVKQFFGKEPHKGVNPDEVVAIGAAIQAGVLQGDVKDVLLLDVTPLSLGIETLGGVFTRLIDRNTTIPTKKSQVFSTAEDGQTAVTIRVFQGEREMAADNKILGQFDLVGIPPAPRGVPQIEVTFDIDANGIVQVSAKDKGTGKEQQIRIQASGGLNDADIEKMVKDAESHAADDKKRRALAEAKNHGEALVHSTEKALSEHGDKVGAAEKGAIESALGELKTALTTEDAEAIQAKTQALAQASLKLGEAMYSAQQGGEQPGAAKKDDVVDAEFTEVDDDKKKSA.

Position 198 is a phosphothreonine; by autocatalysis (Thr-198). The tract at residues 598–631 (YSAQQGGEQPGAAKKDDVVDAEFTEVDDDKKKSA) is disordered.

It belongs to the heat shock protein 70 family.

Acts as a chaperone. The polypeptide is Chaperone protein DnaK (Azorhizobium caulinodans (strain ATCC 43989 / DSM 5975 / JCM 20966 / LMG 6465 / NBRC 14845 / NCIMB 13405 / ORS 571)).